Consider the following 97-residue polypeptide: Large ribosomal subunit protein bL27 (97 aa).

Residues 1-12 (MLKMTLNNLQLF) constitute a propeptide that is removed on maturation. The interval 13–37 (AHKKGGGSTSNGRDSQAKRLGAKAA) is disordered.

Belongs to the bacterial ribosomal protein bL27 family. The N-terminus is cleaved by ribosomal processing cysteine protease Prp.

The chain is Large ribosomal subunit protein bL27 from Streptococcus pneumoniae serotype 2 (strain D39 / NCTC 7466).